The sequence spans 617 residues: Estrogen receptor (617 aa).

Positions 1 to 54 (MSEEQARAEAPAGARQRRRSELEGYSVSLASLKLSPMYPEEEQRTTGGISSTAH) are disordered. Residues 1–186 (MSEEQARAEA…AIGLVKEIRY (186 aa)) form a modulating region. 2 consecutive NR C4-type zinc fingers follow at residues 187–207 (CSVC…CEGC) and 223–247 (CPAT…LRKC). Positions 187 to 252 (CSVCSDYASG…RLRKCYEVGM (66 aa)) form a DNA-binding region, nuclear receptor. Residues 253–315 (MKGGFRKERG…GGGVADVVCM (63 aa)) are hinge. The tract at residues 269–303 (NRRPSGLKERERGYSKAQSGSDVREALPQDGQSSS) is disordered. In terms of domain architecture, NR LBD spans 316–552 (SPEQVLLLLL…DLLLEMLDAH (237 aa)). The interval 568–617 (VSSSPTTTATTPTTNTTTTTTTTTHHPSNGSTCPADLPSNPPGPGQSPSP) is disordered. A compositionally biased stretch (low complexity) spans 573–591 (TTTATTPTTNTTTTTTTTT). A compositionally biased stretch (pro residues) spans 606–617 (SNPPGPGQSPSP).

The protein belongs to the nuclear hormone receptor family. NR3 subfamily. In terms of assembly, binds DNA as a homodimer. Can form a heterodimer with ER-beta. As to expression, ovary and testis.

It localises to the nucleus. Its function is as follows. The steroid hormones and their receptors are involved in the regulation of eukaryotic gene expression and affect cellular proliferation and differentiation in target tissues. This is Estrogen receptor (esr1) from Ictalurus punctatus (Channel catfish).